Reading from the N-terminus, the 432-residue chain is uncharacterized protein (432 aa).

The residue at position 243 (lysine 243) is an N6-(pyridoxal phosphate)lysine.

This sequence belongs to the class-II pyridoxal-phosphate-dependent aminotransferase family. Pyridoxal 5'-phosphate is required as a cofactor.

The protein resides in the cytoplasm. This is an uncharacterized protein from Methanocaldococcus jannaschii (strain ATCC 43067 / DSM 2661 / JAL-1 / JCM 10045 / NBRC 100440) (Methanococcus jannaschii).